A 94-amino-acid polypeptide reads, in one-letter code: Acylphosphatase (94 aa).

The Acylphosphatase-like domain occupies 5–94; that stretch reads RLTAFVHGHV…PRDVEGFVER (90 aa). Catalysis depends on residues arginine 20 and asparagine 38.

Belongs to the acylphosphatase family.

It carries out the reaction an acyl phosphate + H2O = a carboxylate + phosphate + H(+). This chain is Acylphosphatase (acyP), found in Corynebacterium glutamicum (strain ATCC 13032 / DSM 20300 / JCM 1318 / BCRC 11384 / CCUG 27702 / LMG 3730 / NBRC 12168 / NCIMB 10025 / NRRL B-2784 / 534).